A 349-amino-acid polypeptide reads, in one-letter code: Homeobox protein engrailed (349 aa).

4 disordered regions span residues 26–53 (DGPS…SPLS), 146–210 (GKET…PLPP), 228–252 (PSSG…EKRP), and 327–349 (STIP…ARIE). Basic and acidic residues-rich tracts occupy residues 173 to 188 (QMKK…RTES) and 242 to 252 (DKAITPDEKRP). A DNA-binding region (homeobox) is located at residues 249–308 (EKRPRTAFTAEQLSRLKHEFNENRYLTERRRQDLARELGLHENQIKIWFQNNRAKLKKSS).

The protein belongs to the engrailed homeobox family.

The protein localises to the nucleus. The polypeptide is Homeobox protein engrailed (Artemia franciscana (Brine shrimp)).